A 522-amino-acid polypeptide reads, in one-letter code: BTB/POZ domain-containing protein 16 (522 aa).

The region spanning 166–222 (INDPAVTRVAFALALKNLYMKEVEMTVDNVLGVLASAHILQFNRLFQKCVNMMMNRL) is the BTB domain.

This is BTB/POZ domain-containing protein 16 (Btbd16) from Mus musculus (Mouse).